The primary structure comprises 496 residues: Probable CtpA-like serine protease (496 aa).

Over residues 1–16 the composition is skewed to basic and acidic residues; that stretch reads MDDKQHTTSSDDERAE. Residues 1–27 are disordered; it reads MDDKQHTTSSDDERAENATSNQDQQTN. The segment covering 17 to 27 has biased composition (polar residues); sequence NATSNQDQQTN. A helical transmembrane segment spans residues 39–59; the sequence is FISILIGTIIITAVITVVAYI. Residues 124 to 206 form the PDZ domain; the sequence is TKSFNEGVSG…TEVTLTVQRG (83 aa). Residues Ser-329, Asp-340, and Lys-354 each act as charge relay system in the active site.

This sequence belongs to the peptidase S41A family.

The protein resides in the cell membrane. The polypeptide is Probable CtpA-like serine protease (Staphylococcus aureus (strain MRSA252)).